A 289-amino-acid polypeptide reads, in one-letter code: Shikimate dehydrogenase (NADP(+)) (289 aa).

Shikimate contacts are provided by residues 22-24 (SRS) and threonine 69. Lysine 73 functions as the Proton acceptor in the catalytic mechanism. Glutamate 85 lines the NADP(+) pocket. Residues asparagine 94 and aspartate 109 each coordinate shikimate. NADP(+) is bound by residues 134 to 138 (GAGGA), 158 to 163 (NRTLSR), and isoleucine 226. Residue tyrosine 228 coordinates shikimate. Glycine 249 contacts NADP(+).

The protein belongs to the shikimate dehydrogenase family. In terms of assembly, homodimer.

The catalysed reaction is shikimate + NADP(+) = 3-dehydroshikimate + NADPH + H(+). It participates in metabolic intermediate biosynthesis; chorismate biosynthesis; chorismate from D-erythrose 4-phosphate and phosphoenolpyruvate: step 4/7. Functionally, involved in the biosynthesis of the chorismate, which leads to the biosynthesis of aromatic amino acids. Catalyzes the reversible NADPH linked reduction of 3-dehydroshikimate (DHSA) to yield shikimate (SA). The protein is Shikimate dehydrogenase (NADP(+)) of Brucella abortus (strain S19).